The following is a 276-amino-acid chain: Diaminopimelate epimerase (276 aa).

Substrate-binding residues include Asn-13, Gln-46, and Asn-66. Catalysis depends on Cys-75, which acts as the Proton donor. Substrate is bound by residues 76–77 (GN), Asn-159, Asn-192, and 210–211 (ER). Cys-219 serves as the catalytic Proton acceptor. Substrate is bound at residue 220–221 (GT).

The protein belongs to the diaminopimelate epimerase family. Homodimer.

The protein localises to the cytoplasm. The enzyme catalyses (2S,6S)-2,6-diaminopimelate = meso-2,6-diaminopimelate. The protein operates within amino-acid biosynthesis; L-lysine biosynthesis via DAP pathway; DL-2,6-diaminopimelate from LL-2,6-diaminopimelate: step 1/1. Its function is as follows. Catalyzes the stereoinversion of LL-2,6-diaminopimelate (L,L-DAP) to meso-diaminopimelate (meso-DAP), a precursor of L-lysine and an essential component of the bacterial peptidoglycan. The sequence is that of Diaminopimelate epimerase from Pseudomonas savastanoi pv. phaseolicola (strain 1448A / Race 6) (Pseudomonas syringae pv. phaseolicola (strain 1448A / Race 6)).